The following is a 149-amino-acid chain: UPF0178 protein VC0395_A0405/VC395_0897 (149 aa).

The protein belongs to the UPF0178 family.

This is UPF0178 protein VC0395_A0405/VC395_0897 from Vibrio cholerae serotype O1 (strain ATCC 39541 / Classical Ogawa 395 / O395).